The sequence spans 312 residues: MKVAVLGAAGGIGQALALLLKNQLPSGSELSLYDIAPVTPGVAVDLSHIPTAVKIKGFSGEDATPALEGADVVLISAGVARKPGMDRSDLFNVNAGIVKNLVQQIAKTCPKACVGIITNPVNTTVAIAAEVLKKAGVYDKNKLFGVTTLDIIRSNTFVAELKGKLPTEVEVLVIGGHSGVTILPLLSQIPGVSFTEQEAAELTKRIQNAGTEVVEAKAGGGSATLSMGQAAARFGLSLVRALQGEKGVVECAYVEGDGQYARFFSQPLLLGKNGVEERKSIGTLSAFEQHSLDAMLDTLKKDIQLGEDFINK.

NAD(+)-binding positions include 7-13 and aspartate 34; that span reads GAAGGIG. Arginine 81 and arginine 87 together coordinate substrate. NAD(+)-binding positions include asparagine 94 and 117–119; that span reads ITN. Substrate-binding residues include asparagine 119 and arginine 153. Histidine 177 serves as the catalytic Proton acceptor. Methionine 227 contacts NAD(+).

The protein belongs to the LDH/MDH superfamily. MDH type 1 family. Homodimer.

The enzyme catalyses (S)-malate + NAD(+) = oxaloacetate + NADH + H(+). In terms of biological role, catalyzes the reversible oxidation of malate to oxaloacetate. This Salmonella choleraesuis (strain SC-B67) protein is Malate dehydrogenase.